Here is a 577-residue protein sequence, read N- to C-terminus: MLLEFADLDNWVKKRGSILFKKFKYEPFTLEEADKALKEEGIEAENTKELLSILRRKEIIIAKKDPKDKRKRLYQFVKSAKKPTKDNLIRNLKYCADLIRTSVDYKVLLVFLFYKAISDKYLALVEKFVSEGYSKTQAYLMANRSYLTLYDEDEGKLYVWHEIVKSRETIMELANALNKIANLNDNLKDLSKLVEVLGLIGFINEDNMHILEELVRVYNEMDFSEIDYDAIGDAYQWILSYFAPQKCKEGEVYTPVEVVRLIVNLLDIEKDSEVLDPACGSGTMLIESYRYVKDNYGGEIYLYGQERNEIMAILAKLNLILHGVDSEEYEIYIGDSLKNPKIWRGEVDYTIANPPWNLDGYNEDVLKENPDVRRIYNTFVRGGYPPKQSADWAWVQLMLYFARKKVGIVLDSGALFRGGKEKKIRKEIVEKDLIEAIILLPEKLFYNVTAPGIVMILNKNKPEERKGKILFINASLEFEKHPEVRRLNRLGEENIDKIVDVYENWEDIEGFSRVVDLEEIRKNDYNLNVSLYVFPVEEKEDIDLRKELEEFKEIEKKEKEVLDEVIGYVEGILRAGS.

S-adenosyl-L-methionine-binding positions include 251–256 (EVYTPV), 281–283 (SGT), glutamate 306, and 335–336 (DS).

The protein belongs to the N4/N6-methyltransferase family. In terms of assembly, the type I restriction/modification system is composed of three polypeptides R, M and S.

The enzyme catalyses a 2'-deoxyadenosine in DNA + S-adenosyl-L-methionine = an N(6)-methyl-2'-deoxyadenosine in DNA + S-adenosyl-L-homocysteine + H(+). The subtype gamma methyltransferase (M) subunit of a type I restriction enzyme. The M and S subunits together form a methyltransferase (MTase) that methylates A-3 on the top and bottom strands of the sequence 5'-CAAN(7)TGG-3'. In the presence of the R subunit the complex can also act as an endonuclease, binding to the same target sequence but cutting the DNA some distance from this site. Whether the DNA is cut or modified depends on the methylation state of the target sequence. When the target site is unmodified, the DNA is cut. When the target site is hemimethylated, the complex acts as a maintenance MTase modifying the DNA so that both strands become methylated. After locating a non-methylated recognition site, the enzyme complex serves as a molecular motor that translocates DNA in an ATP-dependent manner until a collision occurs that triggers cleavage. The chain is Type I restriction enzyme MjaVII methylase subunit from Methanocaldococcus jannaschii (strain ATCC 43067 / DSM 2661 / JAL-1 / JCM 10045 / NBRC 100440) (Methanococcus jannaschii).